Here is a 360-residue protein sequence, read N- to C-terminus: Thioredoxin domain-containing protein 15 (360 aa).

The signal sequence occupies residues M1–G32. The Extracellular segment spans residues V33–S321. Residues P141–P173 are disordered. Residues R143–E155 are compositionally biased toward acidic residues. The Thioredoxin domain maps to V153 to G296. N187, N194, N206, and N293 each carry an N-linked (GlcNAc...) asparagine glycan. The helical transmembrane segment at V322–I342 threads the bilayer. Residues R343–E360 are Cytoplasmic-facing.

The protein localises to the cell projection. It localises to the cilium membrane. Acts as a positive regulator of ciliary hedgehog signaling. Involved in ciliogenesis. The protein is Thioredoxin domain-containing protein 15 (TXNDC15) of Homo sapiens (Human).